The primary structure comprises 125 residues: uncharacterized protein (125 aa).

Positions 5–33 (NLTVEQLAAELTKLQMENSHLKRKLRRSV) form a coiled coil. 2 disordered regions span residues 22–50 (NSHL…TEPE) and 96–125 (FRLH…GQQQ). Composition is skewed to basic and acidic residues over residues 39 to 50 (EPPKPRELTEPE) and 96 to 112 (FRLH…EKKL). The span at 113–125 (SKEKRRTARGQQQ) shows a compositional bias: basic residues.

This sequence belongs to the herpesviridae BLRF2 family.

This is an uncharacterized protein from Connochaetes taurinus (Blue wildebeest).